Consider the following 455-residue polypeptide: tRNA modification GTPase MnmE (455 aa).

Residues Arg25, Glu85, and Arg124 each coordinate (6S)-5-formyl-5,6,7,8-tetrahydrofolate. The region spanning 221 to 375 (GLSTAIIGRP…IEERINKLFF (155 aa)) is the TrmE-type G domain. Asn231 serves as a coordination point for K(+). GTP contacts are provided by residues 231–236 (NVGKSS), 250–256 (TDIEGTT), and 275–278 (DTAG). Residue Ser235 coordinates Mg(2+). Thr250, Ile252, and Thr255 together coordinate K(+). Thr256 contributes to the Mg(2+) binding site. Lys455 contributes to the (6S)-5-formyl-5,6,7,8-tetrahydrofolate binding site.

The protein belongs to the TRAFAC class TrmE-Era-EngA-EngB-Septin-like GTPase superfamily. TrmE GTPase family. In terms of assembly, homodimer. Heterotetramer of two MnmE and two MnmG subunits. K(+) serves as cofactor.

The protein resides in the cytoplasm. Its function is as follows. Exhibits a very high intrinsic GTPase hydrolysis rate. Involved in the addition of a carboxymethylaminomethyl (cmnm) group at the wobble position (U34) of certain tRNAs, forming tRNA-cmnm(5)s(2)U34. This Streptococcus mutans serotype c (strain ATCC 700610 / UA159) protein is tRNA modification GTPase MnmE.